Consider the following 146-residue polypeptide: Large ribosomal subunit protein bL9 (146 aa).

The protein belongs to the bacterial ribosomal protein bL9 family.

In terms of biological role, binds to the 23S rRNA. The polypeptide is Large ribosomal subunit protein bL9 (Nautilia profundicola (strain ATCC BAA-1463 / DSM 18972 / AmH)).